A 197-amino-acid chain; its full sequence is Female-specific protein transformer (197 aa).

2 stretches are compositionally biased toward basic and acidic residues: residues 1 to 17 and 24 to 39; these read MKMDADSSGTQHRDSRG and REREYHGRSSERDSRK. 2 disordered regions span residues 1–136 and 158–197; these read MKMD…PKII and GYQRLPRPPPFPPAPYRYRQRPPFIGVPRFGYRNAGRPPY. Composition is skewed to basic residues over residues 58–75 and 84–127; these read RRLRQRAHQSTRRTRSRS and SRHR…RSPH. Over residues 163–172 the composition is skewed to pro residues; that stretch reads PRPPPFPPAP.

The protein resides in the nucleus speckle. Member of the regulatory pathway controlling female somatic sexual differentiation, regulated by Sxl. Activates dsx female-specific splicing by promoting the formation of a splicing enhancer complex which consists of tra, tra2 and sr proteins. Together with tra-2, plays a role in switching fru splicing from the male-specific pattern to the female-specific pattern through activation of the female-specific fru 5'-splice site. No known function in males. This is Female-specific protein transformer (tra) from Drosophila melanogaster (Fruit fly).